A 157-amino-acid chain; its full sequence is SsrA-binding protein (157 aa).

The segment covering 136 to 151 (KRETSAKRDWSREKQR) has biased composition (basic and acidic residues). Residues 136-157 (KRETSAKRDWSREKQRLLKQNS) form a disordered region.

Belongs to the SmpB family.

The protein localises to the cytoplasm. In terms of biological role, required for rescue of stalled ribosomes mediated by trans-translation. Binds to transfer-messenger RNA (tmRNA), required for stable association of tmRNA with ribosomes. tmRNA and SmpB together mimic tRNA shape, replacing the anticodon stem-loop with SmpB. tmRNA is encoded by the ssrA gene; the 2 termini fold to resemble tRNA(Ala) and it encodes a 'tag peptide', a short internal open reading frame. During trans-translation Ala-aminoacylated tmRNA acts like a tRNA, entering the A-site of stalled ribosomes, displacing the stalled mRNA. The ribosome then switches to translate the ORF on the tmRNA; the nascent peptide is terminated with the 'tag peptide' encoded by the tmRNA and targeted for degradation. The ribosome is freed to recommence translation, which seems to be the essential function of trans-translation. The sequence is that of SsrA-binding protein from Cereibacter sphaeroides (strain ATCC 17029 / ATH 2.4.9) (Rhodobacter sphaeroides).